The sequence spans 570 residues: Serine/threonine-protein kinase STY17 (570 aa).

Residues 112 to 145 (LNGNSGDVDPSDPAVNEDAQSSYNSRSLAPPTFG) form a disordered region. Residues 129–145 (DAQSSYNSRSLAPPTFG) are compositionally biased toward polar residues. The region spanning 180 to 260 (EITFSTIDRP…PCSKQKSITF (81 aa)) is the ACT domain. One can recognise a Protein kinase domain in the interval 292–545 (LKIEKKVACG…EIIEMLNQLI (254 aa)). ATP-binding positions include 298 to 306 (VACGSYGEL) and K319. D413 functions as the Proton acceptor in the catalytic mechanism. S441 carries the phosphoserine modification. T445 is modified (phosphothreonine).

Belongs to the protein kinase superfamily. Ser/Thr protein kinase family. Post-translationally, autophosphorylated on serine and threonine residues. Autophosphorylated at Thr-445.

The protein resides in the cytoplasm. Its subcellular location is the cytosol. The enzyme catalyses L-seryl-[protein] + ATP = O-phospho-L-seryl-[protein] + ADP + H(+). It carries out the reaction L-threonyl-[protein] + ATP = O-phospho-L-threonyl-[protein] + ADP + H(+). Activated by autophosphorylation at Thr-445. Functionally, serine/threonine protein kinase that specifically phosphorylates chloroplast precursor proteins in the cytosol within the cleavable presequences (transit peptides). May be part of a cytosolic regulatory network involved in chloroplast protein import. Does not phosphorylate mitochondrion precursor proteins. Specific for ATP and does not utilize other NTPs. Plays a role in chloroplast biogenesis and differentiation in cotyledons, possibly through phosphorylation of chloroplast preproteins. The sequence is that of Serine/threonine-protein kinase STY17 from Arabidopsis thaliana (Mouse-ear cress).